The primary structure comprises 554 residues: MVKISLDNTALYADIDTTPQFEPSKTTVADILTKDALEFIVLLHRTFNSTRKQLLANRSNLQSKLDSGEYRFDFLPETEQIRNDPTWQGAIPAPGLINRSSEITGPPLRNMLVNALNAEVTTYMTDFEDSSSPTWENMIYGQVNLYDAIRNQIDFKTPRKEYRLKDDISRLPTLIVRPRGWHMVEKHLYIDDEPISASIFDFGLYFYHNAKELVKIGKGPYFYLPKMEHHMEVKLWNDIFCVAQDFIGMPRGTIRATVLIETLPAAFQMEEIIYQIREHSSGLNCGRWDYIFSTIKKLRNLPEHVLPNRDLVTMTSPFMDAYVKRLINTCHRRGVHAMGGMAAQIPIKDDPKANEAAMNKVRNDKIREMKNGHDGSWVAHPALAPICNEVFSNMGTANQIYFVPDVHVTSSDLLNTKIQDAQVTTEGIRVNLDIGLQYMEAWLRGSGCVPINHLMEDAATAEVSRCQLYQWVKHGVVLSDTGDKVTPELTAKILNEETAKLASASPLGEKNKFALAAKYFLPEVTGKIFSDFLTTLLYDEIIKPSAKPVDLSKL.

Arg177 (proton acceptor) is an active-site residue. Residue Asp457 is the Proton donor of the active site. The SKL peroxisome targeting motif motif lies at Ser552–Leu554.

Belongs to the malate synthase family. In terms of assembly, interacts with PEX9.

It is found in the peroxisome matrix. It carries out the reaction glyoxylate + acetyl-CoA + H2O = (S)-malate + CoA + H(+). In terms of biological role, allantoin metabolism-specific malate synthase involved in the recycling the glyoxylate generated during allantoin degradation by the ureidoglycollate (UG) hydrolase reaction. The polypeptide is Malate synthase 2 (Saccharomyces cerevisiae (strain ATCC 204508 / S288c) (Baker's yeast)).